Here is a 798-residue protein sequence, read N- to C-terminus: Phenylalanine--tRNA ligase beta subunit (798 aa).

Residues 39–148 enclose the tRNA-binding domain; that stretch reads FDAIEPIVVG…ESFRIGARLV (110 aa). A B5 domain is found at 402 to 478; that stretch reads WQAPVLRFRR…RVRGMDTIEP (77 aa). Positions 456, 462, 465, and 466 each coordinate Mg(2+). The region spanning 708 to 798 is the FDX-ACB domain; it reads PVYPPVRRDI…SLVEKLPVRI (91 aa).

This sequence belongs to the phenylalanyl-tRNA synthetase beta subunit family. Type 1 subfamily. In terms of assembly, tetramer of two alpha and two beta subunits. The cofactor is Mg(2+).

It is found in the cytoplasm. It catalyses the reaction tRNA(Phe) + L-phenylalanine + ATP = L-phenylalanyl-tRNA(Phe) + AMP + diphosphate + H(+). The protein is Phenylalanine--tRNA ligase beta subunit of Nitratidesulfovibrio vulgaris (strain ATCC 29579 / DSM 644 / CCUG 34227 / NCIMB 8303 / VKM B-1760 / Hildenborough) (Desulfovibrio vulgaris).